Reading from the N-terminus, the 347-residue chain is Phosphoribosylformylglycinamidine cyclo-ligase (347 aa).

Belongs to the AIR synthase family.

The protein resides in the cytoplasm. The catalysed reaction is 2-formamido-N(1)-(5-O-phospho-beta-D-ribosyl)acetamidine + ATP = 5-amino-1-(5-phospho-beta-D-ribosyl)imidazole + ADP + phosphate + H(+). It functions in the pathway purine metabolism; IMP biosynthesis via de novo pathway; 5-amino-1-(5-phospho-D-ribosyl)imidazole from N(2)-formyl-N(1)-(5-phospho-D-ribosyl)glycinamide: step 2/2. The chain is Phosphoribosylformylglycinamidine cyclo-ligase from Prochlorococcus marinus (strain AS9601).